We begin with the raw amino-acid sequence, 208 residues long: Small ribosomal subunit protein uS4 (208 aa).

The region spanning 98 to 160 (CRLDNVVYRM…AKKQSRIQLA (63 aa)) is the S4 RNA-binding domain.

Belongs to the universal ribosomal protein uS4 family. As to quaternary structure, part of the 30S ribosomal subunit. Contacts protein S5. The interaction surface between S4 and S5 is involved in control of translational fidelity.

Functionally, one of the primary rRNA binding proteins, it binds directly to 16S rRNA where it nucleates assembly of the body of the 30S subunit. In terms of biological role, with S5 and S12 plays an important role in translational accuracy. The sequence is that of Small ribosomal subunit protein uS4 from Ruthia magnifica subsp. Calyptogena magnifica.